Here is a 473-residue protein sequence, read N- to C-terminus: Adenosylhomocysteinase (473 aa).

Substrate-binding residues include Thr-64, Asp-139, and Glu-199. Position 200–202 (200–202 (TTT)) interacts with NAD(+). Residues Lys-229 and Asp-233 each coordinate substrate. Residues Asn-234, 263–268 (GYGDVG), Glu-286, Asn-321, 342–344 (IGH), and Asn-387 each bind NAD(+).

The protein belongs to the adenosylhomocysteinase family. It depends on NAD(+) as a cofactor.

The protein resides in the cytoplasm. It carries out the reaction S-adenosyl-L-homocysteine + H2O = L-homocysteine + adenosine. Its pathway is amino-acid biosynthesis; L-homocysteine biosynthesis; L-homocysteine from S-adenosyl-L-homocysteine: step 1/1. May play a key role in the regulation of the intracellular concentration of adenosylhomocysteine. The polypeptide is Adenosylhomocysteinase (Paraburkholderia phytofirmans (strain DSM 17436 / LMG 22146 / PsJN) (Burkholderia phytofirmans)).